Reading from the N-terminus, the 420-residue chain is Glutamyl-tRNA reductase (420 aa).

Residues Thr-49–Arg-52, Ser-109, Glu-114–Gln-116, and Gln-120 each bind substrate. The Nucleophile role is filled by Cys-50. Gly-189 to Ile-194 provides a ligand contact to NADP(+).

The protein belongs to the glutamyl-tRNA reductase family. Homodimer.

It carries out the reaction (S)-4-amino-5-oxopentanoate + tRNA(Glu) + NADP(+) = L-glutamyl-tRNA(Glu) + NADPH + H(+). The protein operates within porphyrin-containing compound metabolism; protoporphyrin-IX biosynthesis; 5-aminolevulinate from L-glutamyl-tRNA(Glu): step 1/2. In terms of biological role, catalyzes the NADPH-dependent reduction of glutamyl-tRNA(Glu) to glutamate 1-semialdehyde (GSA). This is Glutamyl-tRNA reductase from Serratia proteamaculans (strain 568).